A 73-amino-acid chain; its full sequence is Translation initiation factor IF-1 1 (73 aa).

The S1-like domain occupies 1 to 72; sequence MAKEELIEFG…TKGRINFRHK (72 aa).

It belongs to the IF-1 family. As to quaternary structure, component of the 30S ribosomal translation pre-initiation complex which assembles on the 30S ribosome in the order IF-2 and IF-3, IF-1 and N-formylmethionyl-tRNA(fMet); mRNA recruitment can occur at any time during PIC assembly.

The protein localises to the cytoplasm. One of the essential components for the initiation of protein synthesis. Stabilizes the binding of IF-2 and IF-3 on the 30S subunit to which N-formylmethionyl-tRNA(fMet) subsequently binds. Helps modulate mRNA selection, yielding the 30S pre-initiation complex (PIC). Upon addition of the 50S ribosomal subunit IF-1, IF-2 and IF-3 are released leaving the mature 70S translation initiation complex. The polypeptide is Translation initiation factor IF-1 1 (Cupriavidus pinatubonensis (strain JMP 134 / LMG 1197) (Cupriavidus necator (strain JMP 134))).